Consider the following 205-residue polypeptide: Small ribosomal subunit protein uS7 (205 aa).

The protein belongs to the universal ribosomal protein uS7 family. In terms of assembly, part of the 30S ribosomal subunit.

Its function is as follows. One of the primary rRNA binding proteins, it binds directly to 16S rRNA where it nucleates assembly of the head domain of the 30S subunit. Is located at the subunit interface close to the decoding center. In Aeropyrum pernix (strain ATCC 700893 / DSM 11879 / JCM 9820 / NBRC 100138 / K1), this protein is Small ribosomal subunit protein uS7.